Here is a 327-residue protein sequence, read N- to C-terminus: Zinc transport protein ZntB (327 aa).

The Cytoplasmic portion of the chain corresponds to 1–273 (MEAIKGADVN…ARRTYTMSLM (273 aa)). The helical transmembrane segment at 274–294 (AMVFLPSTFLTGLFGVNLGGI) threads the bilayer. Over 295-300 (PGGGWR) the chain is Periplasmic. The helical transmembrane segment at 301-321 (FGFSLFCILLVVLIGGVALWL) threads the bilayer. Residues 322–327 (HRSKWL) lie on the Cytoplasmic side of the membrane.

The protein belongs to the CorA metal ion transporter (MIT) (TC 1.A.35) family.

The protein localises to the cell inner membrane. The enzyme catalyses Zn(2+)(out) + H(+)(out) = Zn(2+)(in) + H(+)(in). In terms of biological role, zinc transporter. Acts as a Zn(2+):proton symporter, which likely mediates zinc ion uptake. This chain is Zinc transport protein ZntB, found in Escherichia fergusonii (strain ATCC 35469 / DSM 13698 / CCUG 18766 / IAM 14443 / JCM 21226 / LMG 7866 / NBRC 102419 / NCTC 12128 / CDC 0568-73).